The following is a 68-amino-acid chain: Guanine nucleotide-binding protein G(I)/G(S)/G(O) subunit gamma-10 (68 aa).

Position 2 is an N-acetylserine (Ser2). Position 65 is a cysteine methyl ester (Cys65). The S-geranylgeranyl cysteine moiety is linked to residue Cys65. Positions 66-68 (ALL) are cleaved as a propeptide — removed in mature form.

This sequence belongs to the G protein gamma family. As to quaternary structure, g proteins are composed of 3 units, alpha, beta and gamma. In terms of tissue distribution, abundantly and ubiquitously expressed.

It localises to the cell membrane. Guanine nucleotide-binding proteins (G proteins) are involved as a modulator or transducer in various transmembrane signaling systems. The beta and gamma chains are required for the GTPase activity, for replacement of GDP by GTP, and for G protein-effector interaction. Interacts with beta-1 and beta-2, but not with beta-3. The protein is Guanine nucleotide-binding protein G(I)/G(S)/G(O) subunit gamma-10 (GNG10) of Homo sapiens (Human).